We begin with the raw amino-acid sequence, 104 residues long: Growth-regulated protein homolog alpha (104 aa).

A signal peptide spans 1–30 (MAPAATAAAPRLLRAAMLFLLLVAAGRRAA). 2 cysteine pairs are disulfide-bonded: C40/C66 and C42/C82.

Belongs to the intercrine alpha (chemokine CxC) family.

The protein localises to the secreted. This is Growth-regulated protein homolog alpha from Bos taurus (Bovine).